A 300-amino-acid chain; its full sequence is 2-oxoglutarate-dependent dioxygenase DAO (300 aa).

The Fe2OG dioxygenase domain occupies W149 to P252. Residues H173, D175, and H232 each coordinate Fe cation. R242 serves as a coordination point for 2-oxoglutarate.

Belongs to the iron/ascorbate-dependent oxidoreductase family. Requires Fe(2+) as cofactor.

Its function is as follows. 2-oxoglutarate-dependent dioxygenase essential for auxin catabolism and maintenance of auxin homeostasis in reproductive organs. Catalyzes the irreversible oxidation of indole-3-acetic acid (IAA) to the biologically inactive 2-oxoindole-3-acetic acid (OxIAA). This chain is 2-oxoglutarate-dependent dioxygenase DAO (DAO), found in Oryza sativa subsp. indica (Rice).